The following is a 172-amino-acid chain: Adenine phosphoribosyltransferase (172 aa).

Belongs to the purine/pyrimidine phosphoribosyltransferase family. Homodimer.

It localises to the cytoplasm. The catalysed reaction is AMP + diphosphate = 5-phospho-alpha-D-ribose 1-diphosphate + adenine. It functions in the pathway purine metabolism; AMP biosynthesis via salvage pathway; AMP from adenine: step 1/1. Functionally, catalyzes a salvage reaction resulting in the formation of AMP, that is energically less costly than de novo synthesis. The polypeptide is Adenine phosphoribosyltransferase (Clostridium kluyveri (strain NBRC 12016)).